Here is an 848-residue protein sequence, read N- to C-terminus: Protein SEY1 (848 aa).

The Cytoplasmic segment spans residues 1–733 (MNGNFAAVGS…KRGALGGMTQ (733 aa)). In terms of domain architecture, GB1/RHD3-type G spans 47 to 277 (GFNYHLISVF…FVGGVFLPEY (231 aa)). GTP is bound at residue 57 to 64 (GSQSTGKS). The chain crosses the membrane as a helical span at residues 734-754 (VPLYFWIALFAFGWNEIWMVI). Over 755-757 (RNP) the chain is Lumenal. The helical transmembrane segment at 758 to 778 (FLFILLLLSAGGTYVAYNLSL) threads the bilayer. The Cytoplasmic segment spans residues 779–848 (LGPMMQMTNA…KKKDYDDDGI (70 aa)). The interval 815–848 (LAMPASSKSSGGEQVRMDTLDSKGKKKDYDDDGI) is disordered. Residues 829–848 (VRMDTLDSKGKKKDYDDDGI) show a composition bias toward basic and acidic residues.

The protein belongs to the TRAFAC class dynamin-like GTPase superfamily. GB1/RHD3 GTPase family. RHD3 subfamily.

It is found in the endoplasmic reticulum membrane. Cooperates with the reticulon proteins and tubule-shaping DP1 family proteins to generate and maintain the structure of the tubular endoplasmic reticulum network. Has GTPase activity, which is required for its function in ER organization. The chain is Protein SEY1 from Pyricularia oryzae (strain 70-15 / ATCC MYA-4617 / FGSC 8958) (Rice blast fungus).